An 883-amino-acid polypeptide reads, in one-letter code: DNA topoisomerase 1 (883 aa).

Residues 2–126 (PKLVIVESPT…TKRMVFHEIT (125 aa)) enclose the Toprim domain. Residues Glu-8 and Asp-95 each contribute to the Mg(2+) site. The 443-residue stretch at 141–583 (DQRLVHAQET…QFYRGDRGLE (443 aa)) folds into the Topo IA-type catalytic domain. The tract at residues 175 to 180 (SAGRVQ) is interaction with DNA. Residues 271-294 (SLEEKPTTRKPAPPFTTSTLQQES) are disordered. Tyr-320 functions as the O-(5'-phospho-DNA)-tyrosine intermediate in the catalytic mechanism. The segment at 842-883 (AKAGQAKAKGGRRSTGTPKSGETKARTTKTTKKTTTRRTTSR) is disordered. Residues 867–883 (RTTKTTKKTTTRRTTSR) show a composition bias toward basic residues.

The protein belongs to the type IA topoisomerase family. In terms of assembly, monomer. It depends on Mg(2+) as a cofactor.

The enzyme catalyses ATP-independent breakage of single-stranded DNA, followed by passage and rejoining.. In terms of biological role, releases the supercoiling and torsional tension of DNA, which is introduced during the DNA replication and transcription, by transiently cleaving and rejoining one strand of the DNA duplex. Introduces a single-strand break via transesterification at a target site in duplex DNA. The scissile phosphodiester is attacked by the catalytic tyrosine of the enzyme, resulting in the formation of a DNA-(5'-phosphotyrosyl)-enzyme intermediate and the expulsion of a 3'-OH DNA strand. The free DNA strand then undergoes passage around the unbroken strand, thus removing DNA supercoils. Finally, in the religation step, the DNA 3'-OH attacks the covalent intermediate to expel the active-site tyrosine and restore the DNA phosphodiester backbone. This is DNA topoisomerase 1 from Synechococcus elongatus (strain ATCC 33912 / PCC 7942 / FACHB-805) (Anacystis nidulans R2).